We begin with the raw amino-acid sequence, 479 residues long: Caspase-8 (479 aa).

The propeptide occupies Met1 to Asp216. DED domains are found at residues Asp2–Asn80 and Ala100–Asp177. Residues Ser188 and Ser211 each carry the phosphoserine modification. Lys224 carries the post-translational modification N6-acetyllysine. His317 is an active-site residue. Tyr334 carries the phosphotyrosine modification. Cys360 is an active-site residue. The propeptide occupies Ser375–Asp384. Residue Tyr380 is modified to Phosphotyrosine; by SRC. Position 387 is a phosphoserine; by CDK1 (Ser387). At Arg413 the chain carries (Microbial infection) ADP-riboxanated arginine.

Belongs to the peptidase C14A family. Heterotetramer that consists of two anti-parallel arranged heterodimers, each one formed by a 18 kDa (p18) and a 10 kDa (p10) subunit. Component of the death-induced signaling complex (DISC) composed of cell surface receptor FAS/CD95 or TNFRSF1A, adapter protein FADD and the CASP8 protease; recruitment of CASP8 to the complex is required for processing of CASP8 into the p18 and p10 subunits. Component of the AIM2 PANoptosome complex, a multiprotein complex that drives inflammatory cell death (PANoptosis). Interacts with CFLAR and PEA15. Interacts with TNFAIP8L2. Interacts with CASP8AP2. Interacts with RFFL and RNF34; negatively regulate CASP8 through proteasomal degradation. Interacts with NOL3; decreases CASP8 activity in a mitochondria localization- and phosphorylation-dependent manner and this interaction is dissociated by calcium. Interacts with UBR2ca. Interacts with RIPK1. Interacts with stimulated TNFRSF10B; this interaction is followed by CASP8 proteolytic cleavage and activation. Interacts (phosphorylated on Tyr-380) with PIK3R1. As to quaternary structure, interacts at the endoplasmic reticulum with a complex containing BCAP31, BAP29, BCL2 and/or BCL2L1. In terms of assembly, (Microbial infection) Interacts with human cytomegalovirus/HHV-5 protein vICA/UL36; this interaction inhibits CASP8 activation. (Microbial infection) Interacts with NleF from pathogenic E.coli. As to quaternary structure, (Microbial infection) Interacts with molluscum contagiosum virus protein MC160. In terms of assembly, (Microbial infection) Interacts (via RIP homotypic interaction motif) with herpes simplex virus 1/HHV-1 protein RIR1/ICP6 (via RIP homotypic interaction motif); this interaction prevents necroptosis activation. (Microbial infection) Interacts (via RIP homotypic interaction motif) with herpes simplex virus 2/HHV-2 protein RIR1/ICP10 (via RIP homotypic interaction motif); this interaction prevents necroptosis activation. Post-translationally, generation of the p10 and p18 subunits requires association with the death-inducing signaling complex (DISC), whereas additional processing is likely due to the autocatalytic activity of the activated protease. GZMB and CASP10 can be involved in these processing events. In terms of processing, phosphorylation on Ser-387 during mitosis by CDK1 inhibits activation by proteolysis and prevents apoptosis. Phosphorylation on Tyr-380 by SRC is mediated by interaction with the SRC SH2 domain and does not affect dimerization or recruitment to the death-inducing signaling complex (DISC) but negatively regulates DISC-mediated processing and activation of CASP8, down-regulating its proapoptotic function. Phosphorylation on Tyr-380 also enhances localization to lamellipodia in migrating cells. (Microbial infection) ADP-riboxanation by C.violaceum CopC blocks CASP8 processing, preventing CASP8 activation and ability to mediate extrinsic apoptosis. Post-translationally, (Microbial infection) Proteolytically cleaved by the cowpox virus CRMA death inhibitory protein. Isoform 1, isoform 5 and isoform 7 are expressed in a wide variety of tissues. Highest expression in peripheral blood leukocytes, spleen, thymus and liver. Barely detectable in brain, testis and skeletal muscle.

The protein resides in the cytoplasm. It localises to the nucleus. It is found in the cell projection. The protein localises to the lamellipodium. It catalyses the reaction Strict requirement for Asp at position P1 and has a preferred cleavage sequence of (Leu/Asp/Val)-Glu-Thr-Asp-|-(Gly/Ser/Ala).. With respect to regulation, CASP8 activity is restricted by RIPK1. Inhibited by the effector protein NleF that is produced by pathogenic E.coli; this inhibits apoptosis. In terms of biological role, thiol protease that plays a key role in programmed cell death by acting as a molecular switch for apoptosis, necroptosis and pyroptosis, and is required to prevent tissue damage during embryonic development and adulthood. Initiator protease that induces extrinsic apoptosis by mediating cleavage and activation of effector caspases responsible for FAS/CD95-mediated and TNFRSF1A-induced cell death. Cleaves and activates effector caspases CASP3, CASP4, CASP6, CASP7, CASP9 and CASP10. Binding to the adapter molecule FADD recruits it to either receptor FAS/TNFRSF6 or TNFRSF1A. The resulting aggregate called the death-inducing signaling complex (DISC) performs CASP8 proteolytic activation. The active dimeric enzyme is then liberated from the DISC and free to activate downstream apoptotic proteases. Proteolytic fragments of the N-terminal propeptide (termed CAP3, CAP5 and CAP6) are likely retained in the DISC. In addition to extrinsic apoptosis, also acts as a negative regulator of necroptosis: acts by cleaving RIPK1 at 'Asp-324', which is crucial to inhibit RIPK1 kinase activity, limiting TNF-induced apoptosis, necroptosis and inflammatory response. Also able to initiate pyroptosis by mediating cleavage and activation of gasdermin-C and -D (GSDMC and GSDMD, respectively): gasdermin cleavage promotes release of the N-terminal moiety that binds to membranes and forms pores, triggering pyroptosis. Initiates pyroptosis following inactivation of MAP3K7/TAK1. Also acts as a regulator of innate immunity by mediating cleavage and inactivation of N4BP1 downstream of TLR3 or TLR4, thereby promoting cytokine production. May participate in the Granzyme B (GZMB) cell death pathways. Cleaves PARP1 and PARP2. Independent of its protease activity, promotes cell migration following phosphorylation at Tyr-380. Lacks the catalytic site and may interfere with the pro-apoptotic activity of the complex. Functionally, lacks the catalytic site and may interfere with the pro-apoptotic activity of the complex. Acts as an inhibitor of the caspase cascade. This chain is Caspase-8, found in Homo sapiens (Human).